The chain runs to 919 residues: MEAPEYLDLDEIDFSDDISYSVTSLKTIPELCRRCDTQNEDRSVSSSSWNCGISTLITNTQKPTGIADVYSKFRPVKRVSPLKHQPETLENNESDDQKNQKVVEYQKGGESDLGPQPQELGPGDGVGGPPGKSSEPSTSLGELEHYDLDMDEILDVPYIKSSQQLASFTKVTSEKRILGLCTTINGLSGKACSTGSSESSSSNMAPFCVLSPVKSPHLRKASAVIHDQHKLSTEETEISPPLVKCGSAYEPENQSKDFLNKTFSDPHGRKVEKTTPDCQLRAFHLQSSAAESKPEEQVSGLNRTSSQGPEERSEYLKKVKSILNIVKEGQISLLPHLAADNLDKIHDENGNNLLHIAASQGHAECLQHLTSLMGEDCLNERNTEKLTPAGLAIKNGQLECVRWMVSETEAIAELSCSKDFPSLIHYAGCYGQEKILLWLLQFMQEQGISLDEVDQDGNSAVHVASQHGYLGCIQTLVEYGANVTMQNHAGEKPSQSAERQGHTLCSRYLVVVETCMSLASQVVKLTKQLKEQTVERVTLQNQLQQFLEAQKSEGKSLPSSPSSPSSPASRKSQWKSPDADDDSVAKSKPGVQEGIQVLGSLSASSRARPKAKDEDSDKILRQLLGKEISENVCTQEKLSLEFQDAQASSRNSKKIPLEKRELKLARLRQLMQRSLSESDTDSNNSEDPKTTPVRKADRPRPQPIVESVESMDSAESLHLMIKKHTLASGGRRFPFSIKASKSLDGHSPSPTSESSEPDLESQYPGSGSIPPNQPSGDPQQPSPDSTAAQKVATSPKSALKSPSSKRRTSQNLKLRVTFEEPVVQMEQPSLELNGEKDKDKGRTLQRTSTSNESGDQLKRPFGAFRSIMETLSGNQNNNNNYQAANQLKTSTLPLTSLGRKTDAKGNPASSASKGKNKAA.

Disordered stretches follow at residues 80-99 (SPLKHQPETLENNESDDQKN), 108-140 (GGESDLGPQPQELGPGDGVGGPPGKSSEPSTSL), and 287-313 (SSAAESKPEEQVSGLNRTSSQGPEERS). The segment covering 299 to 308 (SGLNRTSSQG) has biased composition (polar residues). 4 ANK repeats span residues 349–380 (NGNNLLHIAASQGHAECLQHLTSLMGEDCLNE), 384–413 (EKLTPAGLAIKNGQLECVRWMVSETEAIAE), 419–448 (DFPSLIHYAGCYGQEKILLWLLQFMQEQGI), and 456–485 (DGNSAVHVASQHGYLGCIQTLVEYGANVTM). Residues 515–552 (CMSLASQVVKLTKQLKEQTVERVTLQNQLQQFLEAQKS) adopt a coiled-coil conformation. Disordered regions lie at residues 549–615 (AQKS…KDED), 666–713 (RLRQ…SMDS), and 728–919 (SGGR…NKAA). The segment covering 555-571 (KSLPSSPSSPSSPASRK) has biased composition (low complexity). An ANK 5 repeat occupies 603-632 (ASSRARPKAKDEDSDKILRQLLGKEISENV). Residues 667–685 (LRQLMQRSLSESDTDSNNS) are compositionally biased toward low complexity. Residues 686-700 (EDPKTTPVRKADRPR) show a composition bias toward basic and acidic residues. An ANK 6 repeat occupies 699–729 (PRPQPIVESVESMDSAESLHLMIKKHTLASG). Over residues 774–785 (PSGDPQQPSPDS) the composition is skewed to low complexity. Positions 833 to 842 (NGEKDKDKGR) are enriched in basic and acidic residues. Polar residues predominate over residues 844–854 (LQRTSTSNESG). Residues 874 to 886 (NQNNNNNYQAANQ) are compositionally biased toward low complexity.

Homodimer. Heterodimer of isoform 1 and isoform 2. Interacts with SIAH1, SIAH2, SNCA, RNF19A and PRKN. Isoform 2 has a strong tendency to form aggregates and can sequester isoform 1. Post-translationally, ubiquitinated; mediated by SIAH1, SIAH2 or RNF19A and leading to its subsequent proteasomal degradation. In the absence of proteasomal degradation, ubiquitinated SNCAIP accumulates in cytoplasmic inclusion bodies. Isoform 2 is subject to limited ubiquitination that does not lead to proteasomal degradation. Detected in brain (at protein level). Widely expressed, with highest levels in brain, heart and placenta.

Its subcellular location is the cytoplasm. In terms of biological role, isoform 2 inhibits the ubiquitin ligase activity of SIAH1 and inhibits proteasomal degradation of target proteins. Isoform 2 inhibits autoubiquitination and proteasomal degradation of SIAH1, and thereby increases cellular levels of SIAH. Isoform 2 modulates SNCA monoubiquitination by SIAH1. This chain is Synphilin-1 (SNCAIP), found in Homo sapiens (Human).